A 69-amino-acid chain; its full sequence is Antimicrobial peptide Meucin-18 (69 aa).

A signal peptide spans 1-16 (MVIFLAYFLVVNESEA). Residues 38 to 69 (ERSVMNRDLENLFDPYQRNLEMDRLLKQLRNY) constitute a propeptide that is removed on maturation.

This sequence belongs to the non-disulfide-bridged peptide (NDBP) superfamily. Medium-length antimicrobial peptide (group 3) family. As to expression, expressed by the venom gland.

The protein resides in the secreted. Its subcellular location is the target cell membrane. Functionally, amphipathic peptide that exhibits extensive cytolytic activities against both prokaryotic and eukaryotic cells. Acts by fastly disrupting the bacterial membrane. Is more potent against Gram-positive bacteria than against Gram-negative bacteria, and fungi (LC=25.1-8.3 uM). Shows potent activity against penicillin (MIC=3.0 uM) and methicillin (MIC=1.5-3.0 uM) resistant bacteria. Is lethal to the fungus Beauveria sp (LC=1.9 uM), a highly lethal pathogenic fungus to insects and resistant to many AMPs. Shows hemolytic activity against rabbit erythrocytes (37.7% of inhibition at 6.25 uM) and cytolysis against rat dorsal root ganglions. May act by disrupting the integrity of the bacterial cell membrane. Antibiotic activity is not affected by major negatively charged components of the prokaryotic cell wall (e.g. lipopolysaccharides and lipoteichoic acid). In vivo, intravenous injection into mice tail provokes uncomfortable symptoms with a death rate of 12.5%. In vivo, in a mouse model of lethal peritonitis, shows potent antibiotic activity without cytotoxicity, improving the survival rate. The polypeptide is Antimicrobial peptide Meucin-18 (Mesobuthus eupeus (Lesser Asian scorpion)).